Consider the following 442-residue polypeptide: CAAX prenyl protease 1 homolog (442 aa).

Over 1–62 (MDASCLFKAL…KARDYKIDNH (62 aa)) the chain is Lumenal. The helical transmembrane segment at 63–83 (LFGFFHSWFNQLLLTAQLIGG) threads the bilayer. Position 84 (Y84) is a topological domain, cytoplasmic. The helical transmembrane segment at 85–105 (YPFLWYATASYPLHVAVFLSI) threads the bilayer. At 106–146 (NSIIETIIDLPWDLYSTFIIEDAHGFNKQTIGFYFVDKIKK) the chain is on the lumenal side. The helical transmembrane segment at 147–167 (MLVGFALTMPIVYGIEWIIVN) threads the bilayer. Over 168-170 (GGP) the chain is Cytoplasmic. A helical membrane pass occupies residues 171-191 (YFFVYIWLFVSVVVLLLMTIY). The Lumenal portion of the chain corresponds to 192 to 311 (PTFIAPLFDK…ELGHWALWHT (120 aa)). H301 serves as a coordination point for Zn(2+). E302 is an active-site residue. H305 contributes to the Zn(2+) binding site. A helical transmembrane segment spans residues 312–332 (LINLVITEVNLFFSFAVFGYF). Over 333-349 (YKWEALYQGFGYHDTPP) the chain is Cytoplasmic. Residues 350-370 (VIGMMLIFQFVLALYNQLASI) form a helical membrane-spanning segment. The Lumenal segment spans residues 371 to 442 (GMVIHSRSAE…AVRAFQAKNK (72 aa)). E380 serves as a coordination point for Zn(2+). Catalysis depends on D384, which acts as the Proton donor.

This sequence belongs to the peptidase M48A family. Requires Zn(2+) as cofactor.

The protein resides in the endoplasmic reticulum membrane. Its subcellular location is the membrane. It carries out the reaction Hydrolyzes the peptide bond -P2-(S-farnesyl or geranylgeranyl)C-P1'-P2'-P3'-COOH where P1' and P2' are amino acids with aliphatic side chains and P3' is any C-terminal residue.. Proteolytically removes the C-terminal three residues of farnesylated proteins. The chain is CAAX prenyl protease 1 homolog from Caenorhabditis elegans.